We begin with the raw amino-acid sequence, 619 residues long: Protein DFG16 (619 aa).

Methionine 1 is a topological domain (extracellular). The chain crosses the membrane as a helical span at residues 2–22; the sequence is IIRLHFYYLLTLVYHLGLVGA. At 23–167 the chain is on the cytoplasmic side; it reads YEKAARKRIQ…KDPFPLGMIM (145 aa). The interval 33-54 is disordered; the sequence is PPDLIPGPPGHKLGDERPPHYD. A compositionally biased stretch (basic and acidic residues) spans 44–54; sequence KLGDERPPHYD. Residues 168–188 traverse the membrane as a helical segment; it reads ITFASGCICVATWMLFLVVLL. At 189–203 the chain is on the extracellular side; it reads LPSDNHNRRNKVVHV. A helical transmembrane segment spans residues 204-224; that stretch reads YVLFSAIIRTVFLNETIAVIF. Topologically, residues 225 to 291 are cytoplasmic; sequence DSQYHDDYQD…IPFKMKKGTH (67 aa). Residues 292-312 traverse the membrane as a helical segment; that stretch reads IIITVGCFLSLADNILFANLL. Residues 313–321 lie on the Extracellular side of the membrane; that stretch reads WRKNLVVLK. Residues 322–342 traverse the membrane as a helical segment; sequence VFYKLIELLIYTIFISIICYF. The Cytoplasmic portion of the chain corresponds to 343–378; that stretch reads TWHNFAYILLPKTAEINTDGKCKTKLRILWENYHET. The helical transmembrane segment at 379 to 399 threads the bilayer; that stretch reads IPLLAYNILIFILFYFTTIFF. The Extracellular portion of the chain corresponds to 400 to 410; that stretch reads AAFTKHVRGWT. A helical membrane pass occupies residues 411–431; it reads FNFVHLLKVLITVNVWGLIGV. Topologically, residues 432-619 are cytoplasmic; that stretch reads LEKRELHISK…NHIYNYENSD (188 aa). Composition is skewed to polar residues over residues 485-504 and 526-549; these read KSNT…SPTW and KFGQ…TLSK. Disordered regions lie at residues 485 to 506 and 520 to 586; these read KSNT…TWKS and IMKS…ADKH. A compositionally biased stretch (basic residues) spans 552 to 561; sequence QLLRKPRRKT.

Its subcellular location is the membrane. Functionally, involved in invasion during filamentous growth. This chain is Protein DFG16 (DFG16), found in Saccharomyces cerevisiae (strain ATCC 204508 / S288c) (Baker's yeast).